Here is a 149-residue protein sequence, read N- to C-terminus: UPF0179 protein MM_0589 (149 aa).

This sequence belongs to the UPF0179 family.

In Methanosarcina mazei (strain ATCC BAA-159 / DSM 3647 / Goe1 / Go1 / JCM 11833 / OCM 88) (Methanosarcina frisia), this protein is UPF0179 protein MM_0589.